We begin with the raw amino-acid sequence, 719 residues long: Forkhead box protein K1 (719 aa).

Position 2 is an N-acetylalanine (Ala-2). The interaction with SIN3A and SIN3B stretch occupies residues 2–40 (AEVGEDSGARALLALRSAPCSPVLCAAAAAAAFPATTSP). Positions 35–67 (PATTSPPPPAQPPPGPPALPAEPGPGPVPSTVA) are disordered. Residues 38-62 (TSPPPPAQPPPGPPALPAEPGPGPV) are compositionally biased toward pro residues. Residues 81–406 (AASVRQSPGP…PLSSRSAPAS (326 aa)) are required for interaction with FOXO4 and MEF2C. A Phosphoserine modification is found at Ser-87. The FHA domain occupies 109-161 (VTIGRNSSQGSVDLSMGLSSFISRRHLQLSFQEPHFYLRCLGKNGVFVDGAFQ). Residues Arg-147 and Arg-177 each carry the omega-N-methylarginine modification. Ser-199, Ser-209, Ser-225, and Ser-229 each carry phosphoserine. Thr-231 and Thr-233 each carry phosphothreonine. Residues Ser-239, Ser-243, Ser-281, and Ser-285 each carry the phosphoserine modification. Positions 291–386 (KPPYSYAQLI…EQAFRKRRQR (96 aa)) form a DNA-binding region, fork-head. Residues 399 to 443 (SSRSAPASPTHPGLMSPRSSGLQTPECLSREGSPIPHDPDLGSKL) form a disordered region. Ser-402 and Ser-406 each carry phosphoserine. Position 408 is a phosphothreonine (Thr-408). Position 414 is a phosphoserine (Ser-414). Phosphothreonine is present on Thr-422. Phosphoserine occurs at positions 427, 431, and 445. Over residues 665 to 685 (AANAAPTPAASTTTSASSSGE) the composition is skewed to low complexity. Positions 665-719 (AANAAPTPAASTTTSASSSGEPEVKRSRVEEPGGTATTQPTAMAATGPQGPGTGE) are disordered. The span at 686 to 695 (PEVKRSRVEE) shows a compositional bias: basic and acidic residues. Residues 696 to 712 (PGGTATTQPTAMAATGP) are compositionally biased toward low complexity.

As to quaternary structure, interacts with SIN3A and SIN3B (via PAH2) to form a complex which represses transcription. Component of SIN3A-, but not SIN3B-, containing multiprotein complexes. Interacts with FOXO4 and MEF2C; both interactions inhibit FOXO4 and MEF2C transactivation activity. Interacts (when phosphorylated) with YWHAE/14-3-3-epsilon; promotes sequestration in the cytoplasm and leads to impaired ability to bind DNA. Interacts with FHL2. Interacts with SRF. Interacts with DVL2 and DVL3; the interaction induces DVL2 nuclear translocation. Interacts with BAP1 (when phosphorylated). Accessory component of the polycomb repressive deubiquitinase (PR-DUB) complex, at least composed of BAP1, one of ASXL1, ASXL2 or (probably) ASXL3 and one of MBD5 or MBD6. The PR-DUB core associates with a number of accessory proteins, including FOXK1, FOXK2, KDM1B, HCFC1 and OGT. Phosphorylation by GSK3 (GSK3A or GSK3B) promotes interaction with YWHAE/14-3-3-epsilon and retention in the cytoplasm. In response to mTORC1 signaling, phosphorylation by GSK3 is prevented, leading to translocation to the nucleus. In terms of tissue distribution, expressed in tissues and cells in which the myoglobin gene is transcriptionally active including cardiac and skeletal myocytes, brain and kidney. In the adult brain, expressed in the piriform cortex and the indusium griseum. In the hippocampus, expression is localized to the dentate gyrus and CA3 area. In the cerebellum, expression is confined to the Purkinje cell layer. Present in neuroretinal cells: expressed in rod bipolar cells, amacrine cells and ganglion cells (at protein level).

It is found in the nucleus. Its subcellular location is the cytoplasm. Its function is as follows. Transcriptional regulator involved in different processes such as glucose metabolism, aerobic glycolysis, muscle cell differentiation and autophagy. Recognizes and binds the forkhead DNA sequence motif (5'-GTAAACA-3') and can both act as a transcription activator or repressor, depending on the context. Together with FOXK2, acts as a key regulator of metabolic reprogramming towards aerobic glycolysis, a process in which glucose is converted to lactate in the presence of oxygen. Acts by promoting expression of enzymes for glycolysis (such as hexokinase-2 (HK2), phosphofructokinase, pyruvate kinase (PKLR) and lactate dehydrogenase), while suppressing further oxidation of pyruvate in the mitochondria by up-regulating pyruvate dehydrogenase kinases PDK1 and PDK4. Probably plays a role in gluconeogenesis during overnight fasting, when lactate from white adipose tissue and muscle is the main substrate. Involved in mTORC1-mediated metabolic reprogramming: in response to mTORC1 signaling, translocates into the nucleus and regulates the expression of genes associated with glycolysis and downstream anabolic pathways, such as HIF1A, thereby regulating glucose metabolism. Together with FOXK2, acts as a negative regulator of autophagy in skeletal muscle: in response to starvation, enters the nucleus, binds the promoters of autophagy genes and represses their expression, preventing proteolysis of skeletal muscle proteins. Acts as a transcriptional regulator of the myogenic progenitor cell population in skeletal muscle. Binds to the upstream enhancer region (CCAC box) of myoglobin (MB) gene, regulating the myogenic progenitor cell population. Promotes muscle progenitor cell proliferation by repressing the transcriptional activity of FOXO4, thereby inhibiting myogenic differentiation. Involved in remodeling processes of adult muscles that occur in response to physiological stimuli. Required to correct temporal orchestration of molecular and cellular events necessary for muscle repair. Represses myogenic differentiation by inhibiting MEFC activity. Positively regulates Wnt/beta-catenin signaling by translocating DVL into the nucleus. Reduces virus replication, probably by binding the interferon stimulated response element (ISRE) to promote antiviral gene expression. Accessory component of the polycomb repressive deubiquitinase (PR-DUB) complex; recruits the PR-DUB complex to specific FOXK1-bound genes. This Mus musculus (Mouse) protein is Forkhead box protein K1.